The primary structure comprises 163 residues: Endoribonuclease YbeY (163 aa).

The Zn(2+) site is built by H121, H125, and H131.

It belongs to the endoribonuclease YbeY family. It depends on Zn(2+) as a cofactor.

The protein localises to the cytoplasm. Single strand-specific metallo-endoribonuclease involved in late-stage 70S ribosome quality control and in maturation of the 3' terminus of the 16S rRNA. This chain is Endoribonuclease YbeY, found in Synechococcus sp. (strain JA-2-3B'a(2-13)) (Cyanobacteria bacterium Yellowstone B-Prime).